The primary structure comprises 608 residues: UvrABC system protein C (608 aa).

In terms of domain architecture, GIY-YIG spans 13 to 91 (HKPGVYIMHD…IKKNSPKYNI (79 aa)). Residues 202–237 (DELTKKLTDKMMAASKNLNFELAAKLRDSITNIQVI) form the UVR domain.

It belongs to the UvrC family. In terms of assembly, interacts with UvrB in an incision complex.

The protein localises to the cytoplasm. Functionally, the UvrABC repair system catalyzes the recognition and processing of DNA lesions. UvrC both incises the 5' and 3' sides of the lesion. The N-terminal half is responsible for the 3' incision and the C-terminal half is responsible for the 5' incision. This Finegoldia magna (strain ATCC 29328 / DSM 20472 / WAL 2508) (Peptostreptococcus magnus) protein is UvrABC system protein C.